The following is a 160-amino-acid chain: Putative pre-16S rRNA nuclease (160 aa).

It belongs to the YqgF nuclease family.

Its subcellular location is the cytoplasm. Functionally, could be a nuclease involved in processing of the 5'-end of pre-16S rRNA. This chain is Putative pre-16S rRNA nuclease, found in Rhodopseudomonas palustris (strain ATCC BAA-98 / CGA009).